We begin with the raw amino-acid sequence, 341 residues long: MNLKVLKVIDGETVFPPPIWMMRQAGRYLPEYRETRKKAGSFLDLCYSPDLAVEVTLQPIRRFGFDAAILFSDILVVPHALGRDLRFEEGKGPLMTPIDADEIFWLETEGVAKRLEPVYETVRLVREQLPDETTLLGFCGAPWTVATYMIAGHGTPDQAPARLFAYRFPEAFEKLLNDLADVSAEYLIEQLGAGADAVQIFDSWSGVLDEDCFERFCIRPVARIVQKVRAVYPQARIIGFPKGAGMLYAGYREKTGVDMLGLDWSVPLSFAALLQEEGAVQGNLDPLRVVAGGNALDEGVDAILERMGQGPLVFNLGHGITPQAPIENVQRMIDRVRGGKS.

Substrate contacts are provided by residues Arg23–Arg27, Phe42, Asp73, Tyr148, Ser203, and His318.

The protein belongs to the uroporphyrinogen decarboxylase family. In terms of assembly, homodimer.

The protein resides in the cytoplasm. It carries out the reaction uroporphyrinogen III + 4 H(+) = coproporphyrinogen III + 4 CO2. It functions in the pathway porphyrin-containing compound metabolism; protoporphyrin-IX biosynthesis; coproporphyrinogen-III from 5-aminolevulinate: step 4/4. Catalyzes the decarboxylation of four acetate groups of uroporphyrinogen-III to yield coproporphyrinogen-III. The chain is Uroporphyrinogen decarboxylase from Brucella melitensis biotype 1 (strain ATCC 23456 / CCUG 17765 / NCTC 10094 / 16M).